Here is a 152-residue protein sequence, read N- to C-terminus: Deoxyuridine 5'-triphosphate nucleotidohydrolase (152 aa).

Substrate contacts are provided by residues 71–73, N84, 88–90, and M98; these read RSG and LID.

The protein belongs to the dUTPase family. Requires Mg(2+) as cofactor.

The enzyme catalyses dUTP + H2O = dUMP + diphosphate + H(+). It functions in the pathway pyrimidine metabolism; dUMP biosynthesis; dUMP from dCTP (dUTP route): step 2/2. Its function is as follows. This enzyme is involved in nucleotide metabolism: it produces dUMP, the immediate precursor of thymidine nucleotides and it decreases the intracellular concentration of dUTP so that uracil cannot be incorporated into DNA. This is Deoxyuridine 5'-triphosphate nucleotidohydrolase from Shewanella halifaxensis (strain HAW-EB4).